Consider the following 635-residue polypeptide: Extracellular metalloproteinase MEP (635 aa).

An N-terminal signal peptide occupies residues methionine 1–alanine 19. Positions histidine 20–histidine 242 are excised as a propeptide. Zn(2+) is bound at residue histidine 428. Residue glutamate 429 is part of the active site. Histidine 432 contributes to the Zn(2+) binding site. Residue asparagine 473 is glycosylated (N-linked (GlcNAc...) asparagine).

Belongs to the peptidase M36 family. It depends on Zn(2+) as a cofactor.

The protein resides in the secreted. Secreted metalloproteinase that allows assimilation of proteinaceous substrates. In Pyricularia oryzae (strain 70-15 / ATCC MYA-4617 / FGSC 8958) (Rice blast fungus), this protein is Extracellular metalloproteinase MEP (MEP).